Consider the following 224-residue polypeptide: Urease accessory protein UreF (224 aa).

The protein belongs to the UreF family. UreD, UreF and UreG form a complex that acts as a GTP-hydrolysis-dependent molecular chaperone, activating the urease apoprotein by helping to assemble the nickel containing metallocenter of UreC. The UreE protein probably delivers the nickel.

The protein localises to the cytoplasm. Required for maturation of urease via the functional incorporation of the urease nickel metallocenter. This is Urease accessory protein UreF from Pseudomonas putida (strain ATCC 47054 / DSM 6125 / CFBP 8728 / NCIMB 11950 / KT2440).